The chain runs to 254 residues: 3-deoxy-manno-octulosonate cytidylyltransferase (254 aa).

The protein belongs to the KdsB family.

The protein localises to the cytoplasm. The catalysed reaction is 3-deoxy-alpha-D-manno-oct-2-ulosonate + CTP = CMP-3-deoxy-beta-D-manno-octulosonate + diphosphate. The protein operates within nucleotide-sugar biosynthesis; CMP-3-deoxy-D-manno-octulosonate biosynthesis; CMP-3-deoxy-D-manno-octulosonate from 3-deoxy-D-manno-octulosonate and CTP: step 1/1. It participates in bacterial outer membrane biogenesis; lipopolysaccharide biosynthesis. Its function is as follows. Activates KDO (a required 8-carbon sugar) for incorporation into bacterial lipopolysaccharide in Gram-negative bacteria. This chain is 3-deoxy-manno-octulosonate cytidylyltransferase, found in Pseudomonas syringae pv. syringae (strain B728a).